The primary structure comprises 126 residues: MSKPQAPRRVGEKEALAVATTVRGSSYKLNLVAGLIRGKKAGEALNILSFSKKAMAKDVRKVLASAIANAENNHNLDVDALIVKEASVGKSIVMKRFATRARGRSTQIIKPFSRIRVVVREQEEAE.

The protein belongs to the universal ribosomal protein uL22 family. As to quaternary structure, part of the 50S ribosomal subunit.

In terms of biological role, this protein binds specifically to 23S rRNA; its binding is stimulated by other ribosomal proteins, e.g. L4, L17, and L20. It is important during the early stages of 50S assembly. It makes multiple contacts with different domains of the 23S rRNA in the assembled 50S subunit and ribosome. The globular domain of the protein is located near the polypeptide exit tunnel on the outside of the subunit, while an extended beta-hairpin is found that lines the wall of the exit tunnel in the center of the 70S ribosome. The chain is Large ribosomal subunit protein uL22 from Zymomonas mobilis subsp. mobilis (strain ATCC 31821 / ZM4 / CP4).